A 204-amino-acid chain; its full sequence is LexA repressor (204 aa).

A DNA-binding region (H-T-H motif) is located at residues 28 to 48 (RAEIAQELGFKSPNAAEEHLK). Residues Ser125 and Lys162 each act as for autocatalytic cleavage activity in the active site.

Belongs to the peptidase S24 family. As to quaternary structure, homodimer.

It carries out the reaction Hydrolysis of Ala-|-Gly bond in repressor LexA.. In terms of biological role, represses a number of genes involved in the response to DNA damage (SOS response), including recA and lexA. In the presence of single-stranded DNA, RecA interacts with LexA causing an autocatalytic cleavage which disrupts the DNA-binding part of LexA, leading to derepression of the SOS regulon and eventually DNA repair. This Ectopseudomonas mendocina (strain ymp) (Pseudomonas mendocina) protein is LexA repressor.